A 797-amino-acid polypeptide reads, in one-letter code: Mitochondrial inner membrane m-AAA protease component AFG3L2 (797 aa).

A mitochondrion-targeting transit peptide spans 1–38 (MAHRCLRLWGRGGCWPRGLQQLLVPGGVGPGEQPCLRT). Positions 39-66 (LYRFVTTQARASRNSLLTDIIAAYQRFC) are cleaved as a propeptide — removed in mature form. The Mitochondrial matrix portion of the chain corresponds to 39–142 (LYRFVTTQAR…KGDIPWDDKD (104 aa)). Residues 76-126 (YFPNGKNGKKASEPKEVMGEKKESKPAATTRSSGGGGGGGGKRGGKKDDSH) form a disordered region. The segment covering 85-100 (KASEPKEVMGEKKESK) has biased composition (basic and acidic residues). The span at 108–117 (SGGGGGGGGK) shows a compositional bias: gly residues. Lys-117 is modified (N6-succinyllysine). A helical membrane pass occupies residues 143–163 (FRMFFLWTALFWGGVMFYLLL). The Mitochondrial intermembrane segment spans residues 164 to 250 (KRSGREITWK…VPVVYIAESD (87 aa)). The helical transmembrane segment at 251 to 271 (GSFLLSMLPTVLIIAFLLYTI) threads the bilayer. Residues 272 to 797 (RRGPAGIGRT…EEPPGEKVAN (526 aa)) lie on the Mitochondrial matrix side of the membrane. ATP is bound by residues Val-310, Ala-311, Thr-352, Gly-353, Lys-354, Thr-355, Leu-356, and His-490. Residue His-574 coordinates Zn(2+). Glu-575 is a catalytic residue. Zn(2+) is bound by residues His-578 and Asp-649. The tract at residues 759-797 (FVEGTGSLDEDTSLPEGLKDWNKEREKEKEEPPGEKVAN) is disordered. Positions 775–797 (GLKDWNKEREKEKEEPPGEKVAN) are enriched in basic and acidic residues.

It in the N-terminal section; belongs to the AAA ATPase family. In the C-terminal section; belongs to the peptidase M41 family. Homohexamer. Forms heterohexamers with SPG7. The m-AAA protease is either composed of homohexamers of AFG3L2 or heterohexamers of AFG3L2 and SPG7. Interacts with MAIP1. Interacts with DNAJC19. Interacts with PHB2. Zn(2+) is required as a cofactor. Upon import into the mitochondrion, the N-terminal transit peptide is cleaved to generate an intermediate form which undergoes autocatalytic proteolytic processing to generate the proteolytically active mature form. As to expression, ubiquitous. Highly expressed in the cerebellar Purkinje cells.

The protein resides in the mitochondrion inner membrane. The catalysed reaction is ATP + H2O = ADP + phosphate + H(+). Its function is as follows. Catalytic component of the m-AAA protease, a protease that plays a key role in proteostasis of inner mitochondrial membrane proteins, and which is essential for axonal and neuron development. AFG3L2 possesses both ATPase and protease activities: the ATPase activity is required to unfold substrates, threading them into the internal proteolytic cavity for hydrolysis into small peptide fragments. The m-AAA protease carries out quality control in the inner membrane of the mitochondria by mediating degradation of mistranslated or misfolded polypeptides. The m-AAA protease complex also promotes the processing and maturation of mitochondrial proteins, such as MRPL32/bL32m, PINK1 and SP7. Mediates protein maturation of the mitochondrial ribosomal subunit MRPL32/bL32m by catalyzing the cleavage of the presequence of MRPL32/bL32m prior to assembly into the mitochondrial ribosome. Required for SPG7 maturation into its active mature form after SPG7 cleavage by mitochondrial-processing peptidase (MPP). Required for the maturation of PINK1 into its 52kDa mature form after its cleavage by mitochondrial-processing peptidase (MPP). Acts as a regulator of calcium in neurons by mediating degradation of SMDT1/EMRE before its assembly with the uniporter complex, limiting the availability of SMDT1/EMRE for MCU assembly and promoting efficient assembly of gatekeeper subunits with MCU. Promotes the proteolytic degradation of GHITM upon hyperpolarization of mitochondria: progressive GHITM degradation leads to respiratory complex I degradation and broad reshaping of the mitochondrial proteome by AFG3L2. Also acts as a regulator of mitochondrial glutathione homeostasis by mediating cleavage and degradation of SLC25A39. SLC25A39 cleavage is prevented when SLC25A39 binds iron-sulfur. Involved in the regulation of OMA1-dependent processing of OPA1. May act by mediating processing of OMA1 precursor, participating in OMA1 maturation. The chain is Mitochondrial inner membrane m-AAA protease component AFG3L2 from Homo sapiens (Human).